Reading from the N-terminus, the 159-residue chain is Small ribosomal subunit protein uS4 (159 aa).

The S4 RNA-binding domain occupies 106 to 158 (RRLQTLVFRMGLAKSIHHARQLVVHGHVLVAGRRVTSPGFLVPRELEDKITIE).

The protein belongs to the universal ribosomal protein uS4 family. In terms of assembly, part of the 30S ribosomal subunit. Contacts protein S5. The interaction surface between S4 and S5 is involved in control of translational fidelity.

One of the primary rRNA binding proteins, it binds directly to 16S rRNA where it nucleates assembly of the body of the 30S subunit. Functionally, with S5 and S12 plays an important role in translational accuracy. The chain is Small ribosomal subunit protein uS4 from Pyrobaculum calidifontis (strain DSM 21063 / JCM 11548 / VA1).